Here is a 116-residue protein sequence, read N- to C-terminus: Putative pterin-4-alpha-carbinolamine dehydratase (116 aa).

It belongs to the pterin-4-alpha-carbinolamine dehydratase family.

It catalyses the reaction (4aS,6R)-4a-hydroxy-L-erythro-5,6,7,8-tetrahydrobiopterin = (6R)-L-erythro-6,7-dihydrobiopterin + H2O. The chain is Putative pterin-4-alpha-carbinolamine dehydratase from Xylella fastidiosa (strain M23).